A 248-amino-acid chain; its full sequence is 5'-nucleotidase SurE (248 aa).

Residues Asp8, Asp9, Ser39, and Asn91 each contribute to the a divalent metal cation site.

The protein belongs to the SurE nucleotidase family. The cofactor is a divalent metal cation.

The protein localises to the cytoplasm. It catalyses the reaction a ribonucleoside 5'-phosphate + H2O = a ribonucleoside + phosphate. Its function is as follows. Nucleotidase that shows phosphatase activity on nucleoside 5'-monophosphates. The sequence is that of 5'-nucleotidase SurE from Geobacter sp. (strain M21).